The chain runs to 396 residues: Ribosomal RNA large subunit methyltransferase I (396 aa).

The PUA domain occupies 2–81; that stretch reads SVRLVLAKGR…ESIDIAFFSR (80 aa).

This sequence belongs to the methyltransferase superfamily. RlmI family.

The protein resides in the cytoplasm. It catalyses the reaction cytidine(1962) in 23S rRNA + S-adenosyl-L-methionine = 5-methylcytidine(1962) in 23S rRNA + S-adenosyl-L-homocysteine + H(+). In terms of biological role, specifically methylates the cytosine at position 1962 (m5C1962) of 23S rRNA. This Escherichia coli O157:H7 protein is Ribosomal RNA large subunit methyltransferase I.